A 426-amino-acid polypeptide reads, in one-letter code: Histidine--tRNA ligase (426 aa).

This sequence belongs to the class-II aminoacyl-tRNA synthetase family. In terms of assembly, homodimer.

It localises to the cytoplasm. The enzyme catalyses tRNA(His) + L-histidine + ATP = L-histidyl-tRNA(His) + AMP + diphosphate + H(+). The sequence is that of Histidine--tRNA ligase from Pseudoalteromonas translucida (strain TAC 125).